The primary structure comprises 545 residues: Thermosome subunit (545 aa).

Belongs to the TCP-1 chaperonin family. As to quaternary structure, forms an oligomeric complex of eight-membered rings.

Its function is as follows. Molecular chaperone; binds unfolded polypeptides in vitro, and has a weak ATPase activity. This Desulfurococcus sp. (strain SY) protein is Thermosome subunit (ths).